The following is a 677-amino-acid chain: Sulfate transporter 2.2 (677 aa).

Residues methionine 1–aspartate 110 are Cytoplasmic-facing. Residues leucine 111–leucine 131 traverse the membrane as a helical segment. The Extracellular portion of the chain corresponds to alanine 132–glycine 133. Residues leucine 134–glycine 154 traverse the membrane as a helical segment. Residues threonine 155–glutamate 158 are Cytoplasmic-facing. The chain crosses the membrane as a helical span at residues leucine 159 to glutamine 179. The Extracellular segment spans residues aspartate 180–lysine 190. The chain crosses the membrane as a helical span at residues isoleucine 191–leucine 211. Over glycine 212–phenylalanine 213 the chain is Cytoplasmic. Residues leucine 214 to isoleucine 234 traverse the membrane as a helical segment. Residues glycine 235 to glutamine 270 lie on the Extracellular side of the membrane. A glycan (N-linked (GlcNAc...) asparagine) is linked at asparagine 250. A helical membrane pass occupies residues proline 271–glycine 291. At lysine 292 to lysine 296 the chain is on the cytoplasmic side. Residues leucine 297–tyrosine 317 traverse the membrane as a helical segment. The Extracellular segment spans residues leucine 318–glycine 352. Residues glutamine 353–glycine 373 form a helical membrane-spanning segment. The Cytoplasmic portion of the chain corresponds to arginine 374–glutamate 389. A helical transmembrane segment spans residues methionine 390–glycine 410. Residues serine 411–glycine 422 lie on the Extracellular side of the membrane. N-linked (GlcNAc...) asparagine glycosylation is present at asparagine 418. The helical transmembrane segment at cysteine 423–leucine 443 threads the bilayer. Residues threonine 444–phenylalanine 446 are Cytoplasmic-facing. The chain crosses the membrane as a helical span at residues leucine 447–isoleucine 467. Residues aspartate 468–aspartate 482 are Extracellular-facing. A helical membrane pass occupies residues phenylalanine 483–leucine 503. Over leucine 504–cysteine 677 the chain is Cytoplasmic. Residues tyrosine 540–tyrosine 666 form the STAS domain.

The protein belongs to the SLC26A/SulP transporter (TC 2.A.53) family. As to expression, expressed in the phloem in roots and in the phloem of vascular bundles in leaves.

The protein localises to the membrane. Low-affinity H(+)/sulfate cotransporter that may be involved in the distribution of sulfate from vascular bundles to the palisade cells of the leaves. Plays a central role in the regulation of sulfate assimilation. The sequence is that of Sulfate transporter 2.2 (SULTR2;2) from Arabidopsis thaliana (Mouse-ear cress).